The following is a 319-amino-acid chain: Lambda-crystallin homolog (319 aa).

At Ala-2 the chain carries N-acetylalanine. Ser-3 carries the phosphoserine modification. Residues 16–17, Asp-36, Glu-97, and Lys-102 contribute to the NAD(+) site; that span reads VI. Position 111 is a phosphoserine (Ser-111).

This sequence belongs to the 3-hydroxyacyl-CoA dehydrogenase family. As to quaternary structure, homodimer. Widely expressed, with highest levels in liver and kidney.

The protein localises to the cytoplasm. The catalysed reaction is L-gulonate + NAD(+) = 3-dehydro-L-gulonate + NADH + H(+). With respect to regulation, inhibited by malonate. Its function is as follows. Has high L-gulonate 3-dehydrogenase activity. It also exhibits low dehydrogenase activity toward L-3-hydroxybutyrate (HBA) and L-threonate. The sequence is that of Lambda-crystallin homolog (CRYL1) from Homo sapiens (Human).